The sequence spans 683 residues: Phenoloxidase 3 (683 aa).

A propeptide spanning residues 1–48 (MADKKNLLLLFDHPTEPVFMDKGGNGTVFDVPASYVTDRYNKMCKKVQ) is cleaved from the precursor. Asn-25 carries N-linked (GlcNAc...) asparagine glycosylation. His-209, His-213, and His-239 together coordinate Cu cation. Residue Glu-351 is the Proton acceptor of the active site. Residue Asn-358 is glycosylated (N-linked (GlcNAc...) asparagine). Positions 366, 370, and 406 each coordinate Cu cation. Residues Asn-492 and Asn-514 are each glycosylated (N-linked (GlcNAc...) asparagine). 2 disulfide bridges follow: Cys-574–Cys-617 and Cys-576–Cys-624.

It belongs to the tyrosinase family. Cu(2+) is required as a cofactor. In terms of processing, upon activation, a trypsin type protease cleaves prophenol oxidase to yield the active enzyme.

It localises to the secreted. The catalysed reaction is 2 L-dopa + O2 = 2 L-dopaquinone + 2 H2O. The enzyme catalyses L-tyrosine + O2 = L-dopaquinone + H2O. Its function is as follows. This is a copper-containing oxidase that functions in the formation of pigments such as melanins and other polyphenolic compounds. Catalyzes the rate-limiting conversions of tyrosine to DOPA, DOPA to DOPA-quinone and possibly 5,6 dihydroxyindole to indole-5'6 quinone. The protein is Phenoloxidase 3 (PPO3) of Drosophila erecta (Fruit fly).